Here is a 258-residue protein sequence, read N- to C-terminus: Insulin-like growth factor-binding protein 4 (258 aa).

A signal peptide spans M1–G21. Positions E23–L103 constitute an IGFBP N-terminal domain. 6 disulfide bridges follow: C27–C53, C30–C55, C38–C56, C44–C59, C67–C80, and C74–C100. N125 carries an N-linked (GlcNAc...) asparagine glycan. Cystine bridges form between C131–C138, C174–C204, C215–C226, and C228–C249. Positions Q171–C249 constitute a Thyroglobulin type-1 domain. S255 bears the Phosphoserine mark.

In terms of assembly, binds IGF2 more than IGF1.

The protein resides in the secreted. Functionally, IGF-binding proteins prolong the half-life of the IGFs and have been shown to either inhibit or stimulate the growth promoting effects of the IGFs on cell culture. They alter the interaction of IGFs with their cell surface receptors. The polypeptide is Insulin-like growth factor-binding protein 4 (IGFBP4) (Bos taurus (Bovine)).